The chain runs to 710 residues: Prolyl endopeptidase (710 aa).

The residue at position 1 (Met-1) is an N-acetylmethionine. Lys-157 is modified (N6-acetyllysine). Catalysis depends on charge relay system residues Ser-554, Asp-641, and His-680.

It belongs to the peptidase S9A family. In terms of tissue distribution, expressed in all tissues tested: uterus, kidney, heart, lung, small intestine, smooth muscle, liver, spleen, thymus, adrenal, pituitary and whole brain.

It is found in the cytoplasm. It carries out the reaction Hydrolysis of Pro-|-Xaa &gt;&gt; Ala-|-Xaa in oligopeptides.. Its activity is regulated as follows. Inhibited by DFP, Z-Pro-prolinal and poststatin, but not by PMSF, SBTI, EDTA, leupeptin, E-64 and pepstatin. Cleaves peptide bonds on the C-terminal side of prolyl residues within peptides that are up to approximately 30 amino acids long. Has high activity on the succinyl- (suc-) peptide-4-methylcoumaryl-7-amide (MCA) substrates suc-Gly-Pro-Leu-Gly-Pro-MCA, suc-Gly-Pro-MCA and suc-Ala-Ala-Ala-MCA. The sequence is that of Prolyl endopeptidase from Rattus norvegicus (Rat).